Consider the following 892-residue polypeptide: Alanine--tRNA ligase (892 aa).

Residues histidine 594, histidine 598, cysteine 702, and histidine 706 each contribute to the Zn(2+) site.

The protein belongs to the class-II aminoacyl-tRNA synthetase family. It depends on Zn(2+) as a cofactor.

The protein resides in the cytoplasm. The enzyme catalyses tRNA(Ala) + L-alanine + ATP = L-alanyl-tRNA(Ala) + AMP + diphosphate. Functionally, catalyzes the attachment of alanine to tRNA(Ala) in a two-step reaction: alanine is first activated by ATP to form Ala-AMP and then transferred to the acceptor end of tRNA(Ala). Also edits incorrectly charged Ser-tRNA(Ala) and Gly-tRNA(Ala) via its editing domain. In Pyrobaculum neutrophilum (strain DSM 2338 / JCM 9278 / NBRC 100436 / V24Sta) (Thermoproteus neutrophilus), this protein is Alanine--tRNA ligase.